Consider the following 258-residue polypeptide: Acetylglutamate kinase (258 aa).

Substrate contacts are provided by residues 44-45 (GG), Arg-66, and Asn-158. ATP-binding positions include 181-186 (DVSGIL) and 209-211 (IIT).

It belongs to the acetylglutamate kinase family. ArgB subfamily. In terms of assembly, homodimer.

The protein localises to the cytoplasm. It catalyses the reaction N-acetyl-L-glutamate + ATP = N-acetyl-L-glutamyl 5-phosphate + ADP. It functions in the pathway amino-acid biosynthesis; L-arginine biosynthesis; N(2)-acetyl-L-ornithine from L-glutamate: step 2/4. In terms of biological role, catalyzes the ATP-dependent phosphorylation of N-acetyl-L-glutamate. The sequence is that of Acetylglutamate kinase from Shigella dysenteriae serotype 1 (strain Sd197).